The following is a 236-amino-acid chain: Ureidoacrylate amidohydrolase RutB (236 aa).

The active-site Proton acceptor is the Asp24. The active site involves Lys133. Cys166 (nucleophile) is an active-site residue.

This sequence belongs to the isochorismatase family. RutB subfamily.

The enzyme catalyses (Z)-3-ureidoacrylate + H2O + H(+) = (Z)-3-aminoacrylate + NH4(+) + CO2. It catalyses the reaction (Z)-3-ureidoacrylate + H2O = (Z)-3-aminoacrylate + carbamate + H(+). The catalysed reaction is (Z)-2-methylureidoacrylate + H2O + H(+) = (Z)-2-methylaminoacrylate + NH4(+) + CO2. In terms of biological role, hydrolyzes ureidoacrylate to form aminoacrylate and carbamate. The carbamate hydrolyzes spontaneously, thereby releasing one of the nitrogen atoms of the pyrimidine ring as ammonia and one of its carbon atoms as CO2. The chain is Ureidoacrylate amidohydrolase RutB from Klebsiella pneumoniae subsp. pneumoniae (strain ATCC 700721 / MGH 78578).